A 349-amino-acid chain; its full sequence is Protein RecA (349 aa).

65 to 72 (GPESSGKT) provides a ligand contact to ATP. Residues 329-349 (FDGDVDENENEDDSPKTLFDE) form a disordered region. Positions 331 to 340 (GDVDENENED) are enriched in acidic residues.

It belongs to the RecA family.

The protein resides in the cytoplasm. Its function is as follows. Can catalyze the hydrolysis of ATP in the presence of single-stranded DNA, the ATP-dependent uptake of single-stranded DNA by duplex DNA, and the ATP-dependent hybridization of homologous single-stranded DNAs. It interacts with LexA causing its activation and leading to its autocatalytic cleavage. The polypeptide is Protein RecA (Staphylococcus epidermidis (strain ATCC 35984 / DSM 28319 / BCRC 17069 / CCUG 31568 / BM 3577 / RP62A)).